The sequence spans 293 residues: Probable porphobilinogen deaminase (293 aa).

S-(dipyrrolylmethanemethyl)cysteine is present on cysteine 233.

Belongs to the HMBS family. Dipyrromethane is required as a cofactor.

It carries out the reaction 4 porphobilinogen + H2O = hydroxymethylbilane + 4 NH4(+). The protein operates within porphyrin-containing compound metabolism; protoporphyrin-IX biosynthesis; coproporphyrinogen-III from 5-aminolevulinate: step 2/4. In terms of biological role, tetrapolymerization of the monopyrrole PBG into the hydroxymethylbilane pre-uroporphyrinogen in several discrete steps. The chain is Probable porphobilinogen deaminase from Saccharolobus islandicus (strain Y.G.57.14 / Yellowstone #1) (Sulfolobus islandicus).